The chain runs to 78 residues: Large ribosomal subunit protein bL31 (78 aa).

Belongs to the bacterial ribosomal protein bL31 family. Type A subfamily. As to quaternary structure, part of the 50S ribosomal subunit.

Functionally, binds the 23S rRNA. The sequence is that of Large ribosomal subunit protein bL31 (rpmE) from Rickettsia conorii (strain ATCC VR-613 / Malish 7).